Consider the following 596-residue polypeptide: Probable tripeptidyl-peptidase SED2 (596 aa).

The signal sequence occupies residues 1–16; it reads MRLLKFVCLLASVAAA. The propeptide at 17 to 203 is removed in mature form; the sequence is KPTPGASHKV…LESMSVEEFA (187 aa). One can recognise a Peptidase S53 domain in the interval 210-596; the sequence is LVTTACLREL…NFQALTKVLP (387 aa). N-linked (GlcNAc...) asparagine glycosylation is present at asparagine 265. Active-site charge relay system residues include glutamate 286 and aspartate 290. An N-linked (GlcNAc...) asparagine glycan is attached at asparagine 403. The active-site Charge relay system is the serine 501. Aspartate 543 and isoleucine 544 together coordinate Ca(2+). An N-linked (GlcNAc...) asparagine glycan is attached at asparagine 572. Ca(2+) is bound by residues glycine 576 and aspartate 578.

The cofactor is Ca(2+).

The protein resides in the secreted. It is found in the extracellular space. It catalyses the reaction Release of an N-terminal tripeptide from a polypeptide.. In terms of biological role, secreted tripeptidyl-peptidase which degrades proteins at acidic pHs and is involved in virulence. The chain is Probable tripeptidyl-peptidase SED2 (SED2) from Trichophyton verrucosum (strain HKI 0517).